The following is a 547-amino-acid chain: Inositol 1,4,5-trisphosphate receptor-interacting protein (547 aa).

Residues 1 to 15 (MAMGLFRVCLVVVTA) form the signal peptide. Topologically, residues 16–83 (IINHPLLFPR…EEGRQQNETR (68 aa)) are extracellular. N27 and N80 each carry an N-linked (GlcNAc...) asparagine glycan. Residues 32–82 (ENEEEIIRKMQAHQEKLQLEQLRLEEEVARLAAEKEALEQVAEEGRQQNET) are a coiled coil. A helical membrane pass occupies residues 84–100 (VAWDLWSTLCMILFLMI). The Cytoplasmic segment spans residues 101–547 (EVWRQDHQEG…VPSDQPTPKS (447 aa)). The tract at residues 109-129 (EGPSPECLGGEEDELPGLGGA) is disordered. At S547 the chain carries Phosphoserine.

Belongs to the ITPRIP family. Interacts with ITPR. In terms of tissue distribution, detected in brain where it is concentrated in cerebellar Purkinje cells (at protein level).

It localises to the cell membrane. The protein localises to the nucleus outer membrane. Enhances Ca(2+)-mediated inhibition of inositol 1,4,5-triphosphate receptor (ITPR) Ca(2+) release. The chain is Inositol 1,4,5-trisphosphate receptor-interacting protein (ITPRIP) from Homo sapiens (Human).